A 413-amino-acid polypeptide reads, in one-letter code: Glucose-1-phosphate adenylyltransferase (413 aa).

Residues Y102, G167, 182-183 (EK), and S200 each bind alpha-D-glucose 1-phosphate.

The protein belongs to the bacterial/plant glucose-1-phosphate adenylyltransferase family. Homotetramer.

It carries out the reaction alpha-D-glucose 1-phosphate + ATP + H(+) = ADP-alpha-D-glucose + diphosphate. It participates in glycan biosynthesis; glycogen biosynthesis. In terms of biological role, involved in the biosynthesis of ADP-glucose, a building block required for the elongation reactions to produce glycogen. Catalyzes the reaction between ATP and alpha-D-glucose 1-phosphate (G1P) to produce pyrophosphate and ADP-Glc. The sequence is that of Glucose-1-phosphate adenylyltransferase from Deinococcus radiodurans (strain ATCC 13939 / DSM 20539 / JCM 16871 / CCUG 27074 / LMG 4051 / NBRC 15346 / NCIMB 9279 / VKM B-1422 / R1).